A 268-amino-acid polypeptide reads, in one-letter code: Tetraspanin-5 (268 aa).

The Cytoplasmic portion of the chain corresponds to 1-17; that stretch reads MSGKHYKGPEVSCCIKY. A helical transmembrane segment spans residues 18–38; the sequence is FIFGFNVIFWFLGIAFLGIGL. The Extracellular segment spans residues 39–61; it reads WAWNEKGVLSNISSITDLGGFDP. N49 is a glycosylation site (N-linked (GlcNAc...) asparagine). Residues 62 to 82 traverse the membrane as a helical segment; that stretch reads VWLFLVVGGVMFILGFAGCIG. The Cytoplasmic portion of the chain corresponds to 83 to 92; that stretch reads ALRENTFLLK. Residues 93–113 form a helical membrane-spanning segment; sequence FFSVFLGIIFFLELTAGVLAF. Topologically, residues 114–232 are extracellular; sequence VFKDWIKDQL…PQFEKWLQDN (119 aa). Disulfide bonds link C153-C221, C154-C186, C170-C180, and C187-C200. N-linked (GlcNAc...) asparagine glycans are attached at residues N169 and N174. N232 is a glycosylation site (N-linked (GlcNAc...) asparagine). Residues 233–253 form a helical membrane-spanning segment; sequence LTIVAGIFIGIALLQIFGICL. Over 254 to 268 the chain is Cytoplasmic; that stretch reads AQNLVSDIEAVRASW.

The protein belongs to the tetraspanin (TM4SF) family. In terms of assembly, interacts with ADAM10; the interaction influences ADAM10 substrate specificity, endocytosis and turnover. Post-translationally, palmitoylated.

Its subcellular location is the cell membrane. Functionally, part of TspanC8 subgroup, composed of 6 members that interact with the transmembrane metalloprotease ADAM10. This interaction is required for ADAM10 exit from the endoplasmic reticulum and for enzymatic maturation and trafficking to the cell surface as well as substrate specificity. Different TspanC8/ADAM10 complexes have distinct substrates. Promotes ADAM10-mediated cleavage of CD44. Seems to regulate VE-cadherin expression in endothelial cells probably through interaction with ADAM10, promoting leukocyte transmigration. The polypeptide is Tetraspanin-5 (TSPAN5) (Bos taurus (Bovine)).